We begin with the raw amino-acid sequence, 97 residues long: C-C motif chemokine 8 (97 aa).

Positions 1–23 (MKIYAVLLCLLLIAVPVSPEKLT) are cleaved as a signal peptide. 2 cysteine pairs are disulfide-bonded: cysteine 32–cysteine 57 and cysteine 33–cysteine 73.

Belongs to the intercrine beta (chemokine CC) family. In terms of assembly, monomer or homodimer; in equilibrium.

It is found in the secreted. Functionally, chemotactic factor that attracts monocytes. This protein can bind heparin. This chain is C-C motif chemokine 8 (Ccl8), found in Mus musculus (Mouse).